The primary structure comprises 1179 residues: DNA-directed RNA polymerase subunit beta (1179 aa).

The protein belongs to the RNA polymerase beta chain family. In terms of assembly, the RNAP catalytic core consists of 2 alpha, 1 beta, 1 beta' and 1 omega subunit. When a sigma factor is associated with the core the holoenzyme is formed, which can initiate transcription.

The enzyme catalyses RNA(n) + a ribonucleoside 5'-triphosphate = RNA(n+1) + diphosphate. DNA-dependent RNA polymerase catalyzes the transcription of DNA into RNA using the four ribonucleoside triphosphates as substrates. The protein is DNA-directed RNA polymerase subunit beta of Oceanobacillus iheyensis (strain DSM 14371 / CIP 107618 / JCM 11309 / KCTC 3954 / HTE831).